The chain runs to 358 residues: Probable aminomethyltransferase (358 aa).

Belongs to the GcvT family. As to quaternary structure, the glycine cleavage system is composed of four proteins: P, T, L and H.

The catalysed reaction is N(6)-[(R)-S(8)-aminomethyldihydrolipoyl]-L-lysyl-[protein] + (6S)-5,6,7,8-tetrahydrofolate = N(6)-[(R)-dihydrolipoyl]-L-lysyl-[protein] + (6R)-5,10-methylene-5,6,7,8-tetrahydrofolate + NH4(+). The glycine cleavage system catalyzes the degradation of glycine. This chain is Probable aminomethyltransferase, found in Natronomonas pharaonis (strain ATCC 35678 / DSM 2160 / CIP 103997 / JCM 8858 / NBRC 14720 / NCIMB 2260 / Gabara) (Halobacterium pharaonis).